Consider the following 239-residue polypeptide: Phosphoglycolate phosphatase (239 aa).

Asp-14 acts as the Nucleophile in catalysis. 2 residues coordinate Mg(2+): Asp-14 and Asp-16. Lys-160 provides a ligand contact to substrate. 2 residues coordinate Mg(2+): Asp-183 and Asp-187.

This sequence belongs to the archaeal SPP-like hydrolase family. Mg(2+) is required as a cofactor.

The catalysed reaction is 2-phosphoglycolate + H2O = glycolate + phosphate. Catalyzes the dephosphorylation of 2-phosphoglycolate. The polypeptide is Phosphoglycolate phosphatase (Aeropyrum pernix (strain ATCC 700893 / DSM 11879 / JCM 9820 / NBRC 100138 / K1)).